Consider the following 721-residue polypeptide: Polyphosphate kinase (721 aa).

Asparagine 54 provides a ligand contact to ATP. Mg(2+)-binding residues include arginine 379 and arginine 409. Residues 434–468 (THLKTHSKIALVVKRIGGELTSFVHLGTGNYNDKT) enclose the PLD phosphodiesterase domain. Catalysis depends on histidine 439, which acts as the Phosphohistidine intermediate. Positions 472, 568, and 596 each coordinate ATP.

The protein belongs to the polyphosphate kinase 1 (PPK1) family. Mg(2+) serves as cofactor. An intermediate of this reaction is the autophosphorylated ppk in which a phosphate is covalently linked to a histidine residue through a N-P bond.

It catalyses the reaction [phosphate](n) + ATP = [phosphate](n+1) + ADP. In terms of biological role, catalyzes the reversible transfer of the terminal phosphate of ATP to form a long-chain polyphosphate (polyP). The protein is Polyphosphate kinase of Staphylococcus haemolyticus (strain JCSC1435).